The sequence spans 597 residues: DNA mismatch repair protein MutL (597 aa).

It belongs to the DNA mismatch repair MutL/HexB family.

This protein is involved in the repair of mismatches in DNA. It is required for dam-dependent methyl-directed DNA mismatch repair. May act as a 'molecular matchmaker', a protein that promotes the formation of a stable complex between two or more DNA-binding proteins in an ATP-dependent manner without itself being part of a final effector complex. The protein is DNA mismatch repair protein MutL of Rhodopseudomonas palustris (strain HaA2).